The primary structure comprises 344 residues: tRNA(Ile)-lysidine synthase (344 aa).

Residue 43-48 coordinates ATP; it reads SGGADS.

It belongs to the tRNA(Ile)-lysidine synthase family.

The protein resides in the cytoplasm. The catalysed reaction is cytidine(34) in tRNA(Ile2) + L-lysine + ATP = lysidine(34) in tRNA(Ile2) + AMP + diphosphate + H(+). In terms of biological role, ligates lysine onto the cytidine present at position 34 of the AUA codon-specific tRNA(Ile) that contains the anticodon CAU, in an ATP-dependent manner. Cytidine is converted to lysidine, thus changing the amino acid specificity of the tRNA from methionine to isoleucine. This chain is tRNA(Ile)-lysidine synthase, found in Bordetella bronchiseptica (strain ATCC BAA-588 / NCTC 13252 / RB50) (Alcaligenes bronchisepticus).